Here is a 503-residue protein sequence, read N- to C-terminus: 2-phosphoxylose phosphatase 1 (503 aa).

Residues 1–6 (MLARSR) are Cytoplasmic-facing. Residues 7-27 (FILVLVVGALLAVLSFSLQYL) traverse the membrane as a helical; Signal-anchor for type II membrane protein segment. At 28–503 (HLIPTNPVAE…YQQACHQTVL (476 aa)) the chain is on the lumenal side. The segment at 38–63 (QRSAGRSRKRVNPVLHTDPPAPDPIR) is disordered. An N-linked (GlcNAc...) asparagine glycan is attached at Asn-73. His-98 serves as the catalytic Nucleophile. Asn-365 is a glycosylation site (N-linked (GlcNAc...) asparagine). Residue Asp-396 is the Proton donor of the active site. An N-linked (GlcNAc...) asparagine glycan is attached at Asn-490.

Belongs to the histidine acid phosphatase family.

The protein localises to the golgi apparatus membrane. The catalysed reaction is 3-O-[beta-D-GlcA-(1-&gt;3)-beta-D-Gal-(1-&gt;3)-beta-D-Gal-(1-&gt;4)-beta-D-2-O-P-Xyl]-L-seryl-[protein] + H2O = 3-O-(beta-D-GlcA-(1-&gt;3)-beta-D-Gal-(1-&gt;3)-beta-D-Gal-(1-&gt;4)-beta-D-Xyl)-L-seryl-[protein] + phosphate. Functionally, responsible for the 2-O-dephosphorylation of xylose in the glycosaminoglycan-protein linkage region of proteoglycans thereby regulating the amount of mature glycosaminoglycan (GAG) chains. Sulfated glycosaminoglycans (GAGs), including heparan sulfate and chondroitin sulfate, are synthesized on the so-called common GAG-protein linkage region (GlcUAbeta1-3Galbeta1-3Galbeta1-4Xylbeta1-O-Ser) of core proteins, which is formed by the stepwise addition of monosaccharide residues by the respective specific glycosyltransferases. This is 2-phosphoxylose phosphatase 1 from Danio rerio (Zebrafish).